Consider the following 511-residue polypeptide: Pentatricopeptide repeat-containing protein At5g08510 (511 aa).

PPR repeat units lie at residues 46–80, 81–115, 116–146, 147–181, 182–213, 214–248, 249–279, 281–315, 316–346, and 352–382; these read CTFL…GLRP, SHHT…GFES, DSFC…MSKR, DVPV…NVTS, WTTV…SVKP, NHIT…GFFD, NIYV…LGNQ, NLCS…GEKP, DAVT…MEEV, and KLEH…MPMK. The interval 387-462 is type E motif; it reads VWGTLLGACS…AAGYSYFVEV (76 aa). The tract at residues 463-494 is type E(+) motif; sequence GVDVHKFTVEDKSHPRSYEIYQVLEEIFRRMK.

This sequence belongs to the PPR family. PCMP-E subfamily.

This is Pentatricopeptide repeat-containing protein At5g08510 (PCMP-E20) from Arabidopsis thaliana (Mouse-ear cress).